Reading from the N-terminus, the 206-residue chain is Nucleoside triphosphate pyrophosphatase (206 aa).

The active-site Proton acceptor is Asp-78.

This sequence belongs to the Maf family. It depends on a divalent metal cation as a cofactor.

The protein localises to the cytoplasm. The enzyme catalyses a ribonucleoside 5'-triphosphate + H2O = a ribonucleoside 5'-phosphate + diphosphate + H(+). It catalyses the reaction a 2'-deoxyribonucleoside 5'-triphosphate + H2O = a 2'-deoxyribonucleoside 5'-phosphate + diphosphate + H(+). Functionally, nucleoside triphosphate pyrophosphatase. May have a dual role in cell division arrest and in preventing the incorporation of modified nucleotides into cellular nucleic acids. The protein is Nucleoside triphosphate pyrophosphatase of Prochlorococcus marinus (strain MIT 9312).